The sequence spans 679 residues: Stress-70 protein, mitochondrial (679 aa).

Residues 1 to 46 (MISASRAAAARLVGAAASRGPTAARHQDSWNGLSHEAFRLVSRRDY) constitute a mitochondrion transit peptide. Residues 1 to 432 (MISASRAAAA…IQGGVLAGDV (432 aa)) are interaction with NFS1. Threonine 63 and asparagine 64 together coordinate ADP. The tract at residues 63–431 (TNSCVAVMEG…AIQGGVLAGD (369 aa)) is nucleotide-binding domain (NBD). Lysine 76 is modified (N6-acetyllysine). The residue at position 87 (threonine 87) is a Phosphothreonine. 2 positions are modified to N6-acetyllysine; alternate: lysine 135 and lysine 138. N6-succinyllysine; alternate is present on residues lysine 135 and lysine 138. Lysine 143 is modified (N6-acetyllysine). Position 206 is an N6-acetyllysine; alternate (lysine 206). Lysine 206 carries the post-translational modification N6-succinyllysine; alternate. Position 206 is an N6-malonyllysine; alternate (lysine 206). Lysine 234 and lysine 288 each carry N6-acetyllysine. N6-acetyllysine; alternate is present on lysine 300. N6-succinyllysine; alternate is present on lysine 300. ADP contacts are provided by glutamate 313, lysine 316, and serine 320. N6-succinyllysine is present on lysine 368. Positions 388 and 391 each coordinate ADP. Lysine 394 bears the N6-succinyllysine mark. At serine 408 the chain carries Phosphoserine. Residues 432-441 (VTDVLLLDVT) are interdomain linker. The interaction with FXN and ISCU stretch occupies residues 432–679 (VTDVLLLDVT…QKEDQKEEKQ (248 aa)). Residues 442 to 679 (PLSLGIETLG…QKEDQKEEKQ (238 aa)) are substrate-binding domain (SBD). Arginine 513 bears the Omega-N-methylarginine mark. An N6-acetyllysine; alternate mark is found at lysine 567 and lysine 600. Lysine 567 and lysine 600 each carry N6-succinyllysine; alternate. Lysine 610 carries the post-translational modification N6-succinyllysine. N6-acetyllysine is present on lysine 612. Lysine 646 carries the N6-acetyllysine; alternate modification. N6-succinyllysine; alternate is present on lysine 646. The segment at 656 to 679 (ASEREGSGSSGTGEQKEDQKEEKQ) is disordered. Residues 669–679 (EQKEDQKEEKQ) show a composition bias toward basic and acidic residues.

The protein belongs to the heat shock protein 70 family. In terms of assembly, interacts strongly with the intermediate form of FXN and weakly with its mature form. Interacts with HSCB. Associates with the mitochondrial contact site and cristae organizing system (MICOS) complex, composed of at least MICOS10/MIC10, CHCHD3/MIC19, CHCHD6/MIC25, APOOL/MIC27, IMMT/MIC60, APOO/MIC23/MIC26 and QIL1/MIC13. This complex was also known under the names MINOS or MitOS complex. The MICOS complex associates with mitochondrial outer membrane proteins SAMM50, MTX1, MTX2 and DNAJC11, mitochondrial inner membrane protein TMEM11 and with HSPA9. Interacts with DNLZ, the interaction is required to prevent self-aggregation. Interacts with TESPA1. Interacts with PDPN. Interacts with NFU1, NFS1 and ISCU. Interacts with TP53; the interaction promotes TP53 degradation. Interacts (via SBD domain) with UBXN2A; the interaction with UBXN2A inhibits HSPA9 interaction with and degradation of TP53, thereby promotes TP53 translocation to the nucleus. Interacts with ITPR1 AND VDAC1; this interaction couples ITPR1 to VDAC1. Component of the TIM23 mitochondrial inner membrane pre-sequence translocase complex.

It is found in the mitochondrion. Its subcellular location is the nucleus. The protein localises to the nucleolus. The protein resides in the cytoplasm. It localises to the mitochondrion matrix. The enzyme catalyses ATP + H2O = ADP + phosphate + H(+). Its activity is regulated as follows. The chaperone activity is regulated by ATP-induced allosteric coupling of the nucleotide-binding (NBD) and substrate-binding (SBD) domains. ATP binding in the NBD leads to a conformational change in the NBD, which is transferred through the interdomain linker (IDL) to the substrate-binding domain (SBD). This elicits a reduced substrate affinity and a faster substrate exchange rate. Upon hydrolysis of ATP to ADP, the protein undergoes a conformational change that increases its affinity for substrate proteins. It cycles through repeated phases of ATP hydrolysis and nucleotide exchange, facilitating repeated cycles of substrate binding and release. Functions in collaboration with co-chaperones. Functions with the co-chaperone, DNLZ, to maintain solubility and regulate ATP hydrolysis. Nucleotide exchange factors, GRPEL1 and GRPEL2, accelerate nucleotide exchange. Mitochondrial chaperone that plays a key role in mitochondrial protein import, folding, and assembly. Plays an essential role in the protein quality control system, the correct folding of proteins, the re-folding of misfolded proteins, and the targeting of proteins for subsequent degradation. These processes are achieved through cycles of ATP binding, ATP hydrolysis, and ADP release, mediated by co-chaperones. In mitochondria, it associates with the TIM (translocase of the inner membrane) protein complex to assist in the import and folding of mitochondrial proteins. Plays an important role in mitochondrial iron-sulfur cluster (ISC) biogenesis, interacts with and stabilizes ISC cluster assembly proteins FXN, NFU1, NFS1 and ISCU. Regulates erythropoiesis via stabilization of ISC assembly. Regulates mitochondrial calcium-dependent apoptosis by coupling two calcium channels, ITPR1 and VDAC1, at the mitochondria-associated endoplasmic reticulum (ER) membrane to facilitate calcium transport from the ER lumen to the mitochondria intermembrane space, providing calcium for the downstream calcium channel MCU, which releases it into the mitochondrial matrix. Although primarily located in the mitochondria, it is also found in other cellular compartments. In the cytosol, it associates with proteins involved in signaling, apoptosis, or senescence. It may play a role in cell cycle regulation via its interaction with and promotion of degradation of TP53. May play a role in the control of cell proliferation and cellular aging. Protects against reactive oxygen species (ROS). Extracellular HSPA9 plays a cytoprotective role by preventing cell lysis following immune attack by the membrane attack complex by disrupting formation of the complex. The polypeptide is Stress-70 protein, mitochondrial (Homo sapiens (Human)).